Here is a 55-residue protein sequence, read N- to C-terminus: Large ribosomal subunit protein bL33 (55 aa).

This sequence belongs to the bacterial ribosomal protein bL33 family.

The chain is Large ribosomal subunit protein bL33 from Brucella abortus (strain S19).